The following is a 662-amino-acid chain: Sodium/glucose cotransporter 1 (662 aa).

Residues 1–24 lie on the Extracellular side of the membrane; sequence MDSSTLSPLTTSTAAPLESYERIR. The chain crosses the membrane as a helical span at residues 25 to 47; it reads NAADISVIVIYFLVVMAVGLWAM. Topologically, residues 48-66 are cytoplasmic; the sequence is FSTNRGTVGGFFLAGRSMV. A helical transmembrane segment spans residues 67–90; the sequence is WWPIGASLFASNIGSGHFVGLAGT. The Extracellular segment spans residues 91–95; the sequence is GAASG. Residues 96 to 117 form a helical membrane-spanning segment; the sequence is IATGGFEWNALIMVVVLGWVFV. The Cytoplasmic portion of the chain corresponds to 118-139; it reads PIYIRAGVVTMPEYLQKRFGGK. A helical transmembrane segment spans residues 140-169; the sequence is RIQIYLSILSLLLYIFTKISADIFSGAIFI. Topologically, residues 170–176 are extracellular; that stretch reads QLTLGLD. A helical membrane pass occupies residues 177–193; the sequence is IYVAIIILLVITGLYTI. The Cytoplasmic segment spans residues 194 to 202; that stretch reads TGGLAAVIY. A helical membrane pass occupies residues 203–221; it reads TDTLQTAIMMVGSVILTGF. The Extracellular segment spans residues 222-275; the sequence is AFHEVGGYEAFTEKYMRAIPSQISYGNTSIPQKCYTPREDAFHIFRDAITGDIP. N-linked (GlcNAc...) asparagine glycosylation occurs at N248. Cystine bridges form between C255–C511, C255–C608, C345–C351, C355–C361, and C517–C522. The chain crosses the membrane as a helical span at residues 276–295; that stretch reads WPGLVFGMSILTLWYWCTDQ. Topologically, residues 296 to 309 are cytoplasmic; that stretch reads VIVQRCLSAKNLSH. Residues 310-331 traverse the membrane as a helical segment; the sequence is VKAGCILCGYLKVMPMFLIVMM. Over 332 to 375 the chain is Extracellular; it reads GMVSRILYTDKVACVVPSECERYCGTRVGCTNIAFPTLVVELMP. Residues 376-406 traverse the membrane as a helical segment; it reads NGLRGLMLSVMMASLMSSLTSIFNSASTLFT. Topologically, residues 407 to 422 are cytoplasmic; sequence MDIYTKIRKKASEKEL. A helical transmembrane segment spans residues 423 to 444; the sequence is MIAGRLFMLFLIGISIAWVPIV. At 445-451 the chain is on the extracellular side; it reads QSAQSGQ. A helical membrane pass occupies residues 452 to 477; it reads LFDYIQSITSYLGPPIAAVFLLAIFW. Q457 lines the D-glucose pocket. Residues 478–481 are Cytoplasmic-facing; the sequence is KRVN. A helical membrane pass occupies residues 482–504; the sequence is EPGAFWGLVLGFLIGISRMITEF. Residues 505–525 are Extracellular-facing; the sequence is AYGTGSCMEPSNCPTIICGVH. A helical transmembrane segment spans residues 526–547; the sequence is YLYFAIILFVISIITVVVVSLF. Residues 548–642 are Cytoplasmic-facing; it reads TKPIPDVHLY…TSEHPLWRTV (95 aa). The helical transmembrane segment at 643-660 threads the bilayer; it reads VNINGVILLAVAVFCYAY. Residues 661 to 662 are Extracellular-facing; sequence FA.

It belongs to the sodium:solute symporter (SSF) (TC 2.A.21) family. In terms of processing, N-glycosylation is not necessary for the cotransporter function. As to expression, found predominantly in intestine, renal cortex and in outer renal medulla.

The protein localises to the apical cell membrane. It catalyses the reaction D-glucose(out) + 2 Na(+)(out) = D-glucose(in) + 2 Na(+)(in). The enzyme catalyses D-galactose(out) + 2 Na(+)(out) = D-galactose(in) + 2 Na(+)(in). Its activity is regulated as follows. Enhanced by the interaction with PDZK1IP1/MAP17; but unlike SLC5A2/SGLT2, PDZK1IP1 is not essential for SLC5A1 transporter activity. Possibly modulated by cholesterol binding. Its function is as follows. Electrogenic Na(+)-coupled sugar symporter that actively transports D-glucose or D-galactose at the plasma membrane, with a Na(+) to sugar coupling ratio of 2:1. Transporter activity is driven by a transmembrane Na(+) electrochemical gradient set by the Na(+)/K(+) pump. Has a primary role in the transport of dietary monosaccharides from enterocytes to blood. Responsible for the absorption of D-glucose or D-galactose across the apical brush-border membrane of enterocytes, whereas basolateral exit is provided by GLUT2. Additionally, functions as a D-glucose sensor in enteroendocrine cells, triggering the secretion of the incretins GCG and GIP that control food intake and energy homeostasis. Together with SGLT2, functions in reabsorption of D-glucose from glomerular filtrate, playing a nonredundant role in the S3 segment of the proximal tubules. Transports D-glucose into endometrial epithelial cells, controlling glycogen synthesis and nutritional support for the embryo as well as the decidual transformation of endometrium prior to conception. Acts as a water channel enabling passive water transport in response to the osmotic gradient created upon sugar and Na(+) uptake. Has high water conductivity comparable to aquaporins and therefore is expected to play an important role in transepithelial water permeability, especially in the small intestine. The polypeptide is Sodium/glucose cotransporter 1 (SLC5A1) (Oryctolagus cuniculus (Rabbit)).